The following is a 794-amino-acid chain: PAN2-PAN3 deadenylation complex subunit PAN3 (794 aa).

The segment at 7–36 (SAKDVLCKNILIYGYCKFQDKGCAFSHNKQ) adopts a C3H1-type zinc-finger fold. Disordered stretches follow at residues 40 to 97 (PQQQ…TQSK) and 187 to 226 (AQVG…QQQL). Polar residues-rich tracts occupy residues 83–94 (IQSNGMVNSQET) and 189–199 (VGNNPGSTAPA). Low complexity predominate over residues 200–226 (NLQLQQKQPQQPQQPQQPQQHQQQQQL). The interval 372–668 (QTMQHLSLPD…MDQFILQYIS (297 aa)) is pseudokinase domain. ATP is bound by residues arginine 425 and 494–501 (DYYPNLTT). A coiled-coil region spans residues 669-707 (SHFMTLMNKLQNSHDWVELQLSTELENARLFRLMTKINF). Residues 708-794 (IISEMPTYDL…IDTQFRLLRG (87 aa)) are knob domain.

This sequence belongs to the protein kinase superfamily. PAN3 family. Homodimer. Forms a heterotrimer with a catalytic subunit PAN2 to form the poly(A)-nuclease (PAN) deadenylation complex. Interacts (via PAM-2 motif) with poly(A)-binding protein PAB1 (via PABC domain), conferring substrate specificity of the enzyme complex.

The protein resides in the cytoplasm. In terms of biological role, regulatory subunit of the poly(A)-nuclease (PAN) deadenylation complex, one of two cytoplasmic mRNA deadenylases involved in mRNA turnover. PAN specifically shortens poly(A) tails of RNA and the activity is stimulated by poly(A)-binding protein PAB1. PAN deadenylation is followed by rapid degradation of the shortened mRNA tails by the CCR4-NOT complex. Deadenylated mRNAs are then degraded by two alternative mechanisms, namely exosome-mediated 3'-5' exonucleolytic degradation, or deadenylation-dependent mRNA decaping and subsequent 5'-3' exonucleolytic degradation by XRN1. May also be involved in post-transcriptional maturation of mRNA poly(A) tails. PAN3 acts as a positive regulator for PAN activity, recruiting the catalytic subunit PAN2 to mRNA via its interaction with RNA and with PAB1. This Lodderomyces elongisporus (strain ATCC 11503 / CBS 2605 / JCM 1781 / NBRC 1676 / NRRL YB-4239) (Yeast) protein is PAN2-PAN3 deadenylation complex subunit PAN3.